Consider the following 340-residue polypeptide: MADEGGNPRDLPPVGGHAALSRHIGQSLMADEFDMSFFRDKPLDHGFFSPMSALLPCDESWPVQIVPLQVGVLQLPIPTARRCYKLGQALRRAIESYPEDLKVAIVATGGVSHQVHGERCGFNNPEWDAQFLDLLVNDPQRLTEMTLAEYATLGGMEGAEVITWLIMRGTLSANVERKHQSYYLPSMTGIATLLLENRDQALPAPVNERHRQHMQHQLAGAEQLEGTYPYTLERSAKGYRLNKFLHRMIEPQWRQRFLSEPEALYREAGLSEEESDLLRRRDWRGLIHYGVIFFVLEKLGAVLGVSNLDIYAAMRGQSIEDFMKTRNQQVRYSVAGKAPN.

Histidine 45 (proton donor) is an active-site residue. The Proton acceptor role is filled by histidine 113.

Belongs to the LigB/MhpB extradiol dioxygenase family. Fe(2+) is required as a cofactor.

It catalyses the reaction 3,4,5-trihydroxybenzoate + O2 = (1E)-4-oxobut-1-ene-1,2,4-tricarboxylate + 2 H(+). Functionally, ring-cleavage dioxygenase that acts specifically on gallate to produce the keto-tautomer of 4-oxalomesaconate. Mediates the first step of gallate degradation pathway. This Pseudomonas putida (strain ATCC 47054 / DSM 6125 / CFBP 8728 / NCIMB 11950 / KT2440) protein is Gallate dioxygenase (galA).